Reading from the N-terminus, the 164-residue chain is Transcription elongation factor GreA (164 aa).

The protein belongs to the GreA/GreB family.

Necessary for efficient RNA polymerase transcription elongation past template-encoded arresting sites. The arresting sites in DNA have the property of trapping a certain fraction of elongating RNA polymerases that pass through, resulting in locked ternary complexes. Cleavage of the nascent transcript by cleavage factors such as GreA or GreB allows the resumption of elongation from the new 3'terminus. GreA releases sequences of 2 to 3 nucleotides. This chain is Transcription elongation factor GreA, found in Helicobacter acinonychis (strain Sheeba).